Here is a 372-residue protein sequence, read N- to C-terminus: Aryl-hydrocarbon-interacting protein-like 1 (372 aa).

The region spanning 53–145 (REVGQPMHII…DLDELQKEPQ (93 aa)) is the PPIase FKBP-type domain. 3 TPR repeats span residues 178-211 (VPVLHGEGNRLFKLGRYEEASSKYQEAIICLRNL), 230-263 (NTLILNYCQCLLKKEEYYEVLEHTSDILRHHPGI), and 264-297 (VKAYYVRARAHAEVWNEAEAKADLQKVLELEPSM). Residues 325–372 (NMLSQGATWSPAEPPAEPPAESSTEPPAEPPAEPPAELTLTPGHPLQH) form a disordered region.

Interacts with NUB1.

It localises to the cytoplasm. The protein resides in the nucleus. Its function is as follows. May be important in protein trafficking and/or protein folding and stabilization. The polypeptide is Aryl-hydrocarbon-interacting protein-like 1 (AIPL1) (Saimiri boliviensis boliviensis (Bolivian squirrel monkey)).